A 510-amino-acid polypeptide reads, in one-letter code: MSLNPNGYKLSERTGKLTAYDLMPTTVTAGPETREFLLKVIDVLLDFVKATNDRNEKVLDFHHPEDMKRLLDLDVPDRALPLQQLIEDCATTLKYQVKTGHPHFFNQLSNGLDLISMAGEWLTATANTNMFTYEIAPVFILMENVVLTKMREIIGWSGGDSILAPGGSISNLYAFLAARHKMFPNYKEHGSVGLPGTLVMFTSDQCHYSIKSCAAVCGLGTDHCIVVPSDEHGKMITSELERLILERKAKGDIPFFVNATAGTTVLGAFDDINTIADICQKYNCWMHIDAAWGGGLLMSRKHRHPRFTGVERADSVTWNPHKLMGALLQCSTIHFKEDGLLISCNQMSAEYLFMTDKQYDISYDTGDKVIQCGRHNDIFKLWLQWRAKGTEGFEQQQDRLMELVQYQLKRIREQSDRFHLILEPECVNVSFWYVPKRLRGVPHDAKKEVELGKICPIIKGRMMQKGTLMVGYQPDDRRPNFFRSIISSAAVNEADVDFMLDEIHRLGDDL.

Position 107-109 (107-109) interacts with substrate; sequence QLS. Lysine 322 carries the N6-(pyridoxal phosphate)lysine modification. Arginine 483 is a binding site for substrate.

Belongs to the group II decarboxylase family. In terms of assembly, homodimer. Requires pyridoxal 5'-phosphate as cofactor. In terms of tissue distribution, expressed in the head (at protein level).

It carries out the reaction L-glutamate + H(+) = 4-aminobutanoate + CO2. Catalyzes the production of GABA. The chain is Glutamate decarboxylase (Gad1) from Drosophila melanogaster (Fruit fly).